A 445-amino-acid polypeptide reads, in one-letter code: tRNA-2-methylthio-N(6)-dimethylallyladenosine synthase (445 aa).

The MTTase N-terminal domain occupies 2–117 (QGLYIKSYGC…LPELIVKARK (116 aa)). Cys11, Cys47, Cys80, Cys157, Cys161, and Cys164 together coordinate [4Fe-4S] cluster. In terms of domain architecture, Radical SAM core spans 143 to 374 (KNQKVSAFIS…QELVHKQQLE (232 aa)). In terms of domain architecture, TRAM spans 377–441 (KKMIGETHPV…KNHLTGIIPH (65 aa)).

This sequence belongs to the methylthiotransferase family. MiaB subfamily. As to quaternary structure, monomer. [4Fe-4S] cluster serves as cofactor.

The protein localises to the cytoplasm. The enzyme catalyses N(6)-dimethylallyladenosine(37) in tRNA + (sulfur carrier)-SH + AH2 + 2 S-adenosyl-L-methionine = 2-methylsulfanyl-N(6)-dimethylallyladenosine(37) in tRNA + (sulfur carrier)-H + 5'-deoxyadenosine + L-methionine + A + S-adenosyl-L-homocysteine + 2 H(+). Catalyzes the methylthiolation of N6-(dimethylallyl)adenosine (i(6)A), leading to the formation of 2-methylthio-N6-(dimethylallyl)adenosine (ms(2)i(6)A) at position 37 in tRNAs that read codons beginning with uridine. The protein is tRNA-2-methylthio-N(6)-dimethylallyladenosine synthase of Ehrlichia ruminantium (strain Gardel).